Here is a 350-residue protein sequence, read N- to C-terminus: Derriere protein (350 aa).

The N-terminal stretch at 1–16 (MLSLACFFSFLLMVKS) is a signal peptide. Residues 17 to 236 (SPLTFQERML…SSCKTPRAKR (220 aa)) constitute a propeptide that is removed on maturation. Asparagine 171 and asparagine 202 each carry an N-linked (GlcNAc...) asparagine glycan. 3 cysteine pairs are disulfide-bonded: cysteine 249–cysteine 315, cysteine 278–cysteine 347, and cysteine 282–cysteine 349.

This sequence belongs to the TGF-beta family. In terms of assembly, homodimer; disulfide-linked. Also forms heterodimers with other TGF-beta family members including nodal2/nr-2 and bmp4.

It localises to the secreted. Required for posterior mesoderm formation during embryogenesis. Acts indirectly to suppress head formation by altering mesodermal patterning. Also involved in the establishment of left-right axis asymmetry, acting upstream of nodal/nr-1. Can exert long-range effects in the embryo. The polypeptide is Derriere protein (Xenopus tropicalis (Western clawed frog)).